The chain runs to 577 residues: Moesin (577 aa).

The region spanning 2–295 (PKTINVRVTT…GNHELYMRRR (294 aa)) is the FERM domain. Residue Ser-74 is modified to Phosphoserine. Position 79 is an N6-acetyllysine (Lys-79). N6-succinyllysine is present on Lys-83. The [IL]-x-C-x-x-[DE] motif motif lies at 115–120 (IYCPPE). The residue at position 116 (Tyr-116) is a Phosphotyrosine. Cys-117 is subject to S-nitrosocysteine. Lys-139 and Lys-165 each carry N6-acetyllysine. The span at 375-401 (LEQERKRAQSEAEKLAKERQEAEEAKE) shows a compositional bias: basic and acidic residues. Disordered regions lie at residues 375–409 (LEQERKRAQSEAEKLAKERQEAEEAKEALLQASQD) and 466–518 (AMST…NERV). Phosphoserine is present on Ser-407. The span at 476-487 (AENEQDEQDENG) shows a compositional bias: acidic residues. Residues 492–518 (AELRADAMAKDRSEEERTTEAEKNERV) show a composition bias toward basic and acidic residues. Residue Ser-527 is modified to Phosphoserine. The residue at position 558 (Thr-558) is a Phosphothreonine; by ROCK2 and STK10.

In resting T-cells, part of a PAG1-NHERF1-MSN complex which is disrupted upon TCR activation. Interacts with NHERF1. Interacts with PPP1R16B. Interacts with PDZD8. Interacts with SELPLG and SYK; these interactions mediate the activation of SYK by SELPLG. Interacts with PDPN (via cytoplasmic domain); this interaction activates RHOA and promotes epithelial-mesenchymal transition. Interacts with SPN/CD43 cytoplasmic tail. Interacts with CD44. Interacts with ICAM2. Interacts with ICAM3 (via C-terminus). Interacts with PDZD8. Interacts with F-actin. Interacts with CD46. Interacts with PTPN6. Post-translationally, phosphorylation on Thr-558 is crucial for the formation of microvilli-like structures. Phosphorylation by ROCK2 suppresses the head-to-tail association of the N-terminal and C-terminal halves resulting in an opened conformation which is capable of actin and membrane-binding. Phosphorylation on Thr-558 by STK10 negatively regulates lymphocyte migration and polarization. In terms of processing, S-nitrosylation of Cys-117 is induced by interferon-gamma and oxidatively-modified low-densitity lipoprotein (LDL(ox)) implicating the iNOS-S100A8/9 transnitrosylase complex.

Its subcellular location is the cell membrane. The protein localises to the cytoplasm. It is found in the cytoskeleton. The protein resides in the apical cell membrane. It localises to the cell projection. Its subcellular location is the microvillus membrane. The protein localises to the microvillus. With respect to regulation, a head-to-tail association, of the N-terminal and C-terminal halves results in a closed conformation (inactive form) which is incapable of actin or membrane-binding. Functionally, ezrin-radixin-moesin (ERM) family protein that connects the actin cytoskeleton to the plasma membrane and thereby regulates the structure and function of specific domains of the cell cortex. Tethers actin filaments by oscillating between a resting and an activated state providing transient interactions between moesin and the actin cytoskeleton. Once phosphorylated on its C-terminal threonine, moesin is activated leading to interaction with F-actin and cytoskeletal rearrangement. These rearrangements regulate many cellular processes, including cell shape determination, membrane transport, and signal transduction. The role of moesin is particularly important in immunity acting on both T and B-cells homeostasis and self-tolerance, regulating lymphocyte egress from lymphoid organs. Modulates phagolysosomal biogenesis in macrophages. Participates also in immunologic synapse formation. This chain is Moesin, found in Bos taurus (Bovine).